Consider the following 252-residue polypeptide: Clc-like protein 2 (252 aa).

The next 4 membrane-spanning stretches (helical) occupy residues Tyr7–Trp29, Leu91–Val111, Val127–Ser147, and Ile173–Leu193.

This sequence belongs to the Clc family.

Its subcellular location is the membrane. The protein is Clc-like protein 2 (clc-2) of Caenorhabditis elegans.